Consider the following 421-residue polypeptide: Tubulin gamma-3 chain (421 aa).

Position 94–100 (94–100 (AGGTGSG)) interacts with GTP.

It belongs to the tubulin family.

Its subcellular location is the cytoplasm. It localises to the cytoskeleton. The protein localises to the microtubule organizing center. In terms of biological role, tubulin is the major constituent of microtubules. The gamma chain is found at microtubule organizing centers (MTOC) such as the spindle poles, suggesting that it is involved in the minus-end nucleation of microtubule assembly. In Zea mays (Maize), this protein is Tubulin gamma-3 chain (TUBG3).